Here is a 285-residue protein sequence, read N- to C-terminus: Xanthoxin dehydrogenase (285 aa).

The residue at position 2 (Ser-2) is an N-acetylserine.

Belongs to the short-chain dehydrogenases/reductases (SDR) family. In terms of tissue distribution, predominantly in roots and stems, and at lower levels in leaves and seeds.

The protein resides in the cytoplasm. The catalysed reaction is 2-cis,4-trans-xanthoxin + NAD(+) = 2-cis-(+)-abscisic aldehyde + NADH + H(+). It carries out the reaction 2-trans,4-trans-xanthoxin + NAD(+) = 2-trans-(+)-abscisic aldehyde + NADH + H(+). Involved in the biosynthesis of abscisic acid. Catalyzes the conversion of xanthoxin to abscisic aldehyde. The chain is Xanthoxin dehydrogenase from Arabidopsis thaliana (Mouse-ear cress).